The sequence spans 340 residues: Uroporphyrinogen decarboxylase (340 aa).

Substrate is bound by residues 21 to 25 (RQAGR), Phe-40, Asp-71, Tyr-148, Ser-203, and His-316.

This sequence belongs to the uroporphyrinogen decarboxylase family. As to quaternary structure, homodimer.

It localises to the cytoplasm. The catalysed reaction is uroporphyrinogen III + 4 H(+) = coproporphyrinogen III + 4 CO2. It participates in porphyrin-containing compound metabolism; protoporphyrin-IX biosynthesis; coproporphyrinogen-III from 5-aminolevulinate: step 4/4. Its function is as follows. Catalyzes the decarboxylation of four acetate groups of uroporphyrinogen-III to yield coproporphyrinogen-III. This chain is Uroporphyrinogen decarboxylase, found in Campylobacter jejuni subsp. jejuni serotype O:2 (strain ATCC 700819 / NCTC 11168).